The primary structure comprises 291 residues: 33 kDa chaperonin (291 aa).

2 disulfide bridges follow: Cys-229-Cys-231 and Cys-262-Cys-265.

Belongs to the HSP33 family. Post-translationally, under oxidizing conditions two disulfide bonds are formed involving the reactive cysteines. Under reducing conditions zinc is bound to the reactive cysteines and the protein is inactive.

Its subcellular location is the cytoplasm. Functionally, redox regulated molecular chaperone. Protects both thermally unfolding and oxidatively damaged proteins from irreversible aggregation. Plays an important role in the bacterial defense system toward oxidative stress. The chain is 33 kDa chaperonin from Aliivibrio fischeri (strain ATCC 700601 / ES114) (Vibrio fischeri).